The primary structure comprises 237 residues: rRNA-processing protein EFG1 (237 aa).

A disordered region spans residues 1-24 (MPKTVKNPKNNKSRSRGAPIQVAE). 2 coiled-coil regions span residues 53-113 (DKKI…ISQT) and 166-186 (LKIT…LMEE). The segment at 206–237 (NDKTQKAVLTEEIDAPEQKQDEQQEEQDDFFE) is disordered. Residues 228–237 (QQEEQDDFFE) are compositionally biased toward acidic residues.

Belongs to the EFG1 family.

Its subcellular location is the nucleus. It is found in the nucleolus. Its function is as follows. Involved in rRNA processing. This Candida albicans (strain SC5314 / ATCC MYA-2876) (Yeast) protein is rRNA-processing protein EFG1.